A 505-amino-acid chain; its full sequence is Putative diacyglycerol O-acyltransferase MT0919 (505 aa).

His167 serves as the catalytic Proton acceptor.

It belongs to the long-chain O-acyltransferase family.

It carries out the reaction an acyl-CoA + a 1,2-diacyl-sn-glycerol = a triacyl-sn-glycerol + CoA. Its pathway is glycerolipid metabolism; triacylglycerol biosynthesis. The protein is Putative diacyglycerol O-acyltransferase MT0919 of Mycobacterium tuberculosis (strain CDC 1551 / Oshkosh).